Reading from the N-terminus, the 126-residue chain is Thioredoxin domain-containing protein, mitochondrial (126 aa).

Residues 14-120 (SQKIATNTSF…ILEFLNHIET (107 aa)) form the Thioredoxin domain.

The protein belongs to the thioredoxin family.

The protein resides in the mitochondrion. The chain is Thioredoxin domain-containing protein, mitochondrial from Dictyostelium discoideum (Social amoeba).